The sequence spans 363 residues: Ribonuclease D (363 aa).

Residues 5-168 (ITHPSELTDR…AIHDELTRRL (164 aa)) enclose the 3'-5' exonuclease domain. The 81-residue stretch at 208–288 (EPAAQRRLLR…NTPLPDEEHA (81 aa)) folds into the HRDC domain.

This sequence belongs to the RNase D family. The cofactor is a divalent metal cation.

It is found in the cytoplasm. It catalyses the reaction Exonucleolytic cleavage that removes extra residues from the 3'-terminus of tRNA to produce 5'-mononucleotides.. Functionally, exonuclease involved in the 3' processing of various precursor tRNAs. Initiates hydrolysis at the 3'-terminus of an RNA molecule and releases 5'-mononucleotides. The chain is Ribonuclease D from Xanthomonas oryzae pv. oryzae (strain KACC10331 / KXO85).